The following is a 475-amino-acid chain: Chemotaxis protein MotD (475 aa).

Disordered stretches follow at residues 1 to 175, 195 to 243, and 408 to 475; these read MRPL…PVGG, LQPE…SEPD, and GDSA…HVYM. The segment covering 9 to 22 has biased composition (polar residues); sequence RTSAASRPAQSLSV. Low complexity predominate over residues 79–100; it reads ADVPASMADAASPDARPASERA. Over residues 143-155 the composition is skewed to basic and acidic residues; it reads HSRETVHALRDAI. Gly residues predominate over residues 408 to 417; that stretch reads GDSASGGGGQ. Residues 427–449 show a composition bias toward basic and acidic residues; sequence EGRERAGDDGQGRQPRDGGRAAT.

The protein resides in the cytoplasm. Functionally, required for the rotation of the flagellar motor. Has a positive effect as flagellar rotation increases when an excess of motd is present. The polypeptide is Chemotaxis protein MotD (motD) (Rhizobium meliloti (Ensifer meliloti)).